Here is a 255-residue protein sequence, read N- to C-terminus: Type III pantothenate kinase (255 aa).

6–13 (DVGNTNTV) serves as a coordination point for ATP. Substrate contacts are provided by residues tyrosine 100 and 107–110 (GADR). Aspartate 109 acts as the Proton acceptor in catalysis. Aspartate 129 is a K(+) binding site. Position 132 (threonine 132) interacts with ATP. Threonine 184 is a binding site for substrate.

The protein belongs to the type III pantothenate kinase family. Homodimer. The cofactor is NH4(+). K(+) is required as a cofactor.

The protein localises to the cytoplasm. It catalyses the reaction (R)-pantothenate + ATP = (R)-4'-phosphopantothenate + ADP + H(+). It participates in cofactor biosynthesis; coenzyme A biosynthesis; CoA from (R)-pantothenate: step 1/5. In terms of biological role, catalyzes the phosphorylation of pantothenate (Pan), the first step in CoA biosynthesis. The chain is Type III pantothenate kinase from Acetivibrio thermocellus (strain ATCC 27405 / DSM 1237 / JCM 9322 / NBRC 103400 / NCIMB 10682 / NRRL B-4536 / VPI 7372) (Clostridium thermocellum).